The primary structure comprises 117 residues: Large ribosomal subunit protein bL19 (117 aa).

It belongs to the bacterial ribosomal protein bL19 family.

Functionally, this protein is located at the 30S-50S ribosomal subunit interface and may play a role in the structure and function of the aminoacyl-tRNA binding site. This Shewanella denitrificans (strain OS217 / ATCC BAA-1090 / DSM 15013) protein is Large ribosomal subunit protein bL19.